The following is a 263-amino-acid chain: Small ribosomal subunit protein eS4, Y isoform 1 (263 aa).

One can recognise an S4 RNA-binding domain in the interval 42–104 (LPLIIFLRNR…TGEHFRLVYD (63 aa)).

It belongs to the eukaryotic ribosomal protein eS4 family.

The polypeptide is Small ribosomal subunit protein eS4, Y isoform 1 (RPS4Y1) (Macaca fuscata fuscata (Japanese macaque)).